Reading from the N-terminus, the 255-residue chain is Large ribosomal subunit protein uL4 (255 aa).

The protein belongs to the universal ribosomal protein uL4 family. Part of the 50S ribosomal subunit.

In terms of biological role, one of the primary rRNA binding proteins, this protein initially binds near the 5'-end of the 23S rRNA. It is important during the early stages of 50S assembly. It makes multiple contacts with different domains of the 23S rRNA in the assembled 50S subunit and ribosome. Functionally, forms part of the polypeptide exit tunnel. This chain is Large ribosomal subunit protein uL4, found in Pyrococcus abyssi (strain GE5 / Orsay).